Consider the following 399-residue polypeptide: Probable endo-xylogalacturonan hydrolase A (399 aa).

The signal sequence occupies residues 1-19 (MTFGKAAFLSFSLFGASWA). PbH1 repeat units lie at residues 177 to 207 (TTNA…DIGE), 208 to 229 (STYV…AFKP), 231 to 251 (CNYL…SVGS), 260 to 283 (VQNV…KTYP), and 293 to 314 (VTNV…QIQS). Residue D222 is the Proton donor of the active site. The active site involves H245. N295 and N382 each carry an N-linked (GlcNAc...) asparagine glycan.

The protein belongs to the glycosyl hydrolase 28 family.

Its subcellular location is the secreted. In terms of biological role, pectinolytic enzyme involved in the degradation of xylogalacturonan (xga), a galacturonan backbone heavily substituted with xylose, and which is one important component of the hairy regions of pectin. Activity requires a galacturonic acid backbone substituted with xylose. The chain is Probable endo-xylogalacturonan hydrolase A (xghA) from Emericella nidulans (strain FGSC A4 / ATCC 38163 / CBS 112.46 / NRRL 194 / M139) (Aspergillus nidulans).